The primary structure comprises 859 residues: Ubiquitin carboxyl-terminal hydrolase 23 (859 aa).

Over residues 1–24 (MEVATSSTEITIQTDRDPSSNNNG) the composition is skewed to polar residues. The tract at residues 1-26 (MEVATSSTEITIQTDRDPSSNNNGSC) is disordered. The 304-residue stretch at 107–410 (AGLQNLGNTC…KAYMLFYVRD (304 aa)) folds into the USP domain. The active-site Nucleophile is C116. H369 acts as the Proton acceptor in catalysis. 2 disordered regions span residues 722 to 749 (MISS…ASQN) and 822 to 859 (EESY…AYRI).

It belongs to the peptidase C19 family.

It catalyses the reaction Thiol-dependent hydrolysis of ester, thioester, amide, peptide and isopeptide bonds formed by the C-terminal Gly of ubiquitin (a 76-residue protein attached to proteins as an intracellular targeting signal).. In terms of biological role, recognizes and hydrolyzes the peptide bond at the C-terminal Gly of ubiquitin. Involved in the processing of poly-ubiquitin precursors as well as that of ubiquitinated proteins. This Arabidopsis thaliana (Mouse-ear cress) protein is Ubiquitin carboxyl-terminal hydrolase 23 (UBP23).